Consider the following 88-residue polypeptide: UPF0223 protein YktA (88 aa).

The protein belongs to the UPF0223 family.

The chain is UPF0223 protein YktA (yktA) from Bacillus subtilis (strain 168).